The following is a 482-amino-acid chain: Glutamate--tRNA ligase (482 aa).

The short motif at 9-19 (PSPTGYLHIGG) is the 'HIGH' region element. Residues 252-256 (KLSKR) carry the 'KMSKS' region motif. Lys-255 contributes to the ATP binding site.

The protein belongs to the class-I aminoacyl-tRNA synthetase family. Glutamate--tRNA ligase type 1 subfamily. Monomer.

It localises to the cytoplasm. It catalyses the reaction tRNA(Glu) + L-glutamate + ATP = L-glutamyl-tRNA(Glu) + AMP + diphosphate. Functionally, catalyzes the attachment of glutamate to tRNA(Glu) in a two-step reaction: glutamate is first activated by ATP to form Glu-AMP and then transferred to the acceptor end of tRNA(Glu). This is Glutamate--tRNA ligase from Ureaplasma urealyticum serovar 10 (strain ATCC 33699 / Western).